A 370-amino-acid chain; its full sequence is Ubiquinone biosynthesis O-methyltransferase, mitochondrial (370 aa).

A mitochondrion-targeting transit peptide spans 1-86; sequence MWGGSKLSSS…SYRLPWTRPY (86 aa). Position 125 (arginine 125) interacts with S-adenosyl-L-methionine. An N6-acetyllysine mark is found at lysine 144 and lysine 150. The S-adenosyl-L-methionine site is built by glycine 155 and aspartate 176. Lysine 197 bears the N6-acetyllysine mark. Residue serine 223 coordinates S-adenosyl-L-methionine. Mg(2+) contacts are provided by glutamate 224, glutamate 227, and histidine 228.

It belongs to the class I-like SAM-binding methyltransferase superfamily. UbiG/COQ3 family. In terms of assembly, component of a multi-subunit COQ enzyme complex, composed of at least COQ3, COQ4, COQ5, COQ6, COQ7 and COQ9. Requires Mg(2+) as cofactor.

The protein localises to the mitochondrion inner membrane. The catalysed reaction is 3,4-dihydroxy-5-(all-trans-decaprenyl)benzoate + S-adenosyl-L-methionine = 4-hydroxy-3-methoxy-5-(all-trans-decaprenyl)benzoate + S-adenosyl-L-homocysteine + H(+). It carries out the reaction a 3-demethylubiquinone + S-adenosyl-L-methionine = a ubiquinone + S-adenosyl-L-homocysteine. The enzyme catalyses 3-demethylubiquinol-10 + S-adenosyl-L-methionine = ubiquinol-10 + S-adenosyl-L-homocysteine + H(+). The protein operates within cofactor biosynthesis; ubiquinone biosynthesis. Functionally, O-methyltransferase required for two non-consecutive steps during ubiquinone biosynthesis. Catalyzes the 2 O-methylation of 3,4-dihydroxy-5-(all-trans-decaprenyl)benzoic acid into 4-hydroxy-3-methoxy-5-(all-trans-decaprenyl)benzoic acid. Also catalyzes the last step of ubiquinone biosynthesis by mediating methylation of 3-demethylubiquinone into ubiquinone. Also able to mediate the methylation of 3-demethylubiquinol-10 into ubiquinol-10. In Bos taurus (Bovine), this protein is Ubiquinone biosynthesis O-methyltransferase, mitochondrial.